We begin with the raw amino-acid sequence, 404 residues long: Cysteine desulfurase IscS (404 aa).

Pyridoxal 5'-phosphate contacts are provided by residues 85-86 (GT), Asn165, Gln193, 213-215 (SGH), and Thr251. The Cysteine persulfide intermediate role is filled by Cys338. A [2Fe-2S] cluster-binding site is contributed by Cys338.

This sequence belongs to the class-V pyridoxal-phosphate-dependent aminotransferase family. NifS/IscS subfamily. As to quaternary structure, homodimer. Forms a heterotetramer with IscU, interacts with other sulfur acceptors. It depends on pyridoxal 5'-phosphate as a cofactor.

The protein resides in the cytoplasm. The enzyme catalyses (sulfur carrier)-H + L-cysteine = (sulfur carrier)-SH + L-alanine. It functions in the pathway cofactor biosynthesis; iron-sulfur cluster biosynthesis. Its function is as follows. Master enzyme that delivers sulfur to a number of partners involved in Fe-S cluster assembly, tRNA modification or cofactor biosynthesis. Catalyzes the removal of elemental sulfur atoms from cysteine to produce alanine. Functions as a sulfur delivery protein for Fe-S cluster synthesis onto IscU, an Fe-S scaffold assembly protein, as well as other S acceptor proteins. This chain is Cysteine desulfurase IscS, found in Methanosarcina thermophila.